A 203-amino-acid chain; its full sequence is uncharacterized protein (203 aa).

H34, E97, and H172 together coordinate Fe cation.

It belongs to the hemerythrin family.

It is found in the mitochondrion. This is an uncharacterized protein from Schizosaccharomyces pombe (strain 972 / ATCC 24843) (Fission yeast).